Here is a 474-residue protein sequence, read N- to C-terminus: Bifunctional protein HldE (474 aa).

A ribokinase region spans residues 1–317 (MKLSMPRFDQ…RRAIQRSEGS (317 aa)). 194–197 (NLSE) provides a ligand contact to ATP. Asp263 is an active-site residue. Positions 343-474 (FTNGCFDILH…AIVEKIRNNE (132 aa)) are cytidylyltransferase.

It in the N-terminal section; belongs to the carbohydrate kinase PfkB family. The protein in the C-terminal section; belongs to the cytidylyltransferase family. As to quaternary structure, homodimer.

It catalyses the reaction D-glycero-beta-D-manno-heptose 7-phosphate + ATP = D-glycero-beta-D-manno-heptose 1,7-bisphosphate + ADP + H(+). The catalysed reaction is D-glycero-beta-D-manno-heptose 1-phosphate + ATP + H(+) = ADP-D-glycero-beta-D-manno-heptose + diphosphate. Its pathway is nucleotide-sugar biosynthesis; ADP-L-glycero-beta-D-manno-heptose biosynthesis; ADP-L-glycero-beta-D-manno-heptose from D-glycero-beta-D-manno-heptose 7-phosphate: step 1/4. It functions in the pathway nucleotide-sugar biosynthesis; ADP-L-glycero-beta-D-manno-heptose biosynthesis; ADP-L-glycero-beta-D-manno-heptose from D-glycero-beta-D-manno-heptose 7-phosphate: step 3/4. Its function is as follows. Catalyzes the phosphorylation of D-glycero-D-manno-heptose 7-phosphate at the C-1 position to selectively form D-glycero-beta-D-manno-heptose-1,7-bisphosphate. Catalyzes the ADP transfer from ATP to D-glycero-beta-D-manno-heptose 1-phosphate, yielding ADP-D-glycero-beta-D-manno-heptose. The protein is Bifunctional protein HldE of Pseudomonas fluorescens (strain SBW25).